Consider the following 343-residue polypeptide: Anthranilate phosphoribosyltransferase (343 aa).

Residues glycine 84, 87–88 (GD), threonine 92, 94–97 (NIST), 112–120 (KHGNRGVSS), and serine 124 contribute to the 5-phospho-alpha-D-ribose 1-diphosphate site. An anthranilate-binding site is contributed by glycine 84. Serine 96 is a Mg(2+) binding site. Residue asparagine 115 participates in anthranilate binding. Arginine 170 is an anthranilate binding site. Positions 229 and 230 each coordinate Mg(2+).

Belongs to the anthranilate phosphoribosyltransferase family. As to quaternary structure, homodimer. Mg(2+) is required as a cofactor.

It carries out the reaction N-(5-phospho-beta-D-ribosyl)anthranilate + diphosphate = 5-phospho-alpha-D-ribose 1-diphosphate + anthranilate. The protein operates within amino-acid biosynthesis; L-tryptophan biosynthesis; L-tryptophan from chorismate: step 2/5. Functionally, catalyzes the transfer of the phosphoribosyl group of 5-phosphorylribose-1-pyrophosphate (PRPP) to anthranilate to yield N-(5'-phosphoribosyl)-anthranilate (PRA). This is Anthranilate phosphoribosyltransferase from Burkholderia ambifaria (strain MC40-6).